A 283-amino-acid chain; its full sequence is Urease accessory protein UreD 1 (283 aa).

The protein belongs to the UreD family. As to quaternary structure, ureD, UreF and UreG form a complex that acts as a GTP-hydrolysis-dependent molecular chaperone, activating the urease apoprotein by helping to assemble the nickel containing metallocenter of UreC. The UreE protein probably delivers the nickel.

It localises to the cytoplasm. In terms of biological role, required for maturation of urease via the functional incorporation of the urease nickel metallocenter. This is Urease accessory protein UreD 1 from Brucella anthropi (strain ATCC 49188 / DSM 6882 / CCUG 24695 / JCM 21032 / LMG 3331 / NBRC 15819 / NCTC 12168 / Alc 37) (Ochrobactrum anthropi).